Consider the following 102-residue polypeptide: ATP-dependent Clp protease adapter protein ClpS (102 aa).

Belongs to the ClpS family. Binds to the N-terminal domain of the chaperone ClpA.

In terms of biological role, involved in the modulation of the specificity of the ClpAP-mediated ATP-dependent protein degradation. In Shewanella halifaxensis (strain HAW-EB4), this protein is ATP-dependent Clp protease adapter protein ClpS.